A 219-amino-acid polypeptide reads, in one-letter code: Deoxyribose-phosphate aldolase (219 aa).

The active-site Proton donor/acceptor is D89. K151 acts as the Schiff-base intermediate with acetaldehyde in catalysis. K180 serves as the catalytic Proton donor/acceptor.

This sequence belongs to the DeoC/FbaB aldolase family. DeoC type 1 subfamily.

The protein localises to the cytoplasm. It catalyses the reaction 2-deoxy-D-ribose 5-phosphate = D-glyceraldehyde 3-phosphate + acetaldehyde. Its pathway is carbohydrate degradation; 2-deoxy-D-ribose 1-phosphate degradation; D-glyceraldehyde 3-phosphate and acetaldehyde from 2-deoxy-alpha-D-ribose 1-phosphate: step 2/2. In terms of biological role, catalyzes a reversible aldol reaction between acetaldehyde and D-glyceraldehyde 3-phosphate to generate 2-deoxy-D-ribose 5-phosphate. This Clostridioides difficile (strain 630) (Peptoclostridium difficile) protein is Deoxyribose-phosphate aldolase.